The chain runs to 267 residues: NAD kinase (267 aa).

The active-site Proton acceptor is the aspartate 45. Residues aspartate 45 to glycine 46, asparagine 121 to glutamate 122, arginine 147, aspartate 149, threonine 160 to serine 165, and alanine 184 contribute to the NAD(+) site.

Belongs to the NAD kinase family. The cofactor is a divalent metal cation.

It localises to the cytoplasm. The enzyme catalyses NAD(+) + ATP = ADP + NADP(+) + H(+). In terms of biological role, involved in the regulation of the intracellular balance of NAD and NADP, and is a key enzyme in the biosynthesis of NADP. Catalyzes specifically the phosphorylation on 2'-hydroxyl of the adenosine moiety of NAD to yield NADP. This is NAD kinase from Lactobacillus acidophilus (strain ATCC 700396 / NCK56 / N2 / NCFM).